A 704-amino-acid polypeptide reads, in one-letter code: MPRNTALEKYRNIGICAHVDAGKTTTTERILFYTGLSHKIGEVHDGAATMDWMEQEQERGITITSAATTTFWSGMDQQFEKHRINIIDTPGHVDFTIEVERSLRVLDGAVVVFCGSSGVEPQSETVWRQANKYGVPRIVFVNKMDRSGADFERVCAQIKTRLKANVVPVQLNIGAEEDFKGVIDLIRMKAIMWNEEDMGLTYELVDIPADLQDRAEELRMEMIEAAAEASEELMEKYLEGGELSEDEIHQGLRARVLNNEIVLAFCGSAFKNKGVQAVLDGVVRYLPAPNQVPAIKCETEDGEPASRPSSDDAPFAALAFKLATDPFVGNLTFIRVYSGVLKSGDAVYNPVKGKKERVGRIVQMHANKRDEIKEVRAGDIAACIGLKDVTTGDTLCDQEDVVILEKMDFPEPVISVAVEPKSKADQEKMSIALGKLAAEDPSFRVKTDEESGQTIISGMGELHLDIVVDRMRREFKVEANVGNPQVAYRETIRSKVEQEAKFVRQSGGRGQYGHVFVRFEPLDEVDENGEAKVFKFVDEVVGGVVPKEYIGSVAKGIEEQLNNGVLAGYPMIGVKATLYDGSYHDVDSSEMAFKIAGSMALKEGAKKANACILEPIMKVEVVTPEDYLGDVMGDLNRRRGIIEGMDENPSGRVINALVPLAEMFGYATNVRSISQGRASFSMEFKKYAEVPNNIADEIIKSHNS.

The region spanning 8–290 (EKYRNIGICA…GVVRYLPAPN (283 aa)) is the tr-type G domain. GTP-binding positions include 17–24 (AHVDAGKT), 88–92 (DTPGH), and 142–145 (NKMD).

The protein belongs to the TRAFAC class translation factor GTPase superfamily. Classic translation factor GTPase family. EF-G/EF-2 subfamily.

It is found in the cytoplasm. Catalyzes the GTP-dependent ribosomal translocation step during translation elongation. During this step, the ribosome changes from the pre-translocational (PRE) to the post-translocational (POST) state as the newly formed A-site-bound peptidyl-tRNA and P-site-bound deacylated tRNA move to the P and E sites, respectively. Catalyzes the coordinated movement of the two tRNA molecules, the mRNA and conformational changes in the ribosome. The polypeptide is Elongation factor G (Francisella tularensis subsp. tularensis (strain FSC 198)).